A 719-amino-acid polypeptide reads, in one-letter code: Nucleolar complex protein 2 homolog (719 aa).

The span at 1 to 24 shows a compositional bias: basic residues; sequence MKLLKKSSSLKKGVTKRAKLQKKP. Disordered stretches follow at residues 1 to 67, 86 to 136, and 643 to 719; these read MKLL…GMKK, LQQE…TKIK, and ALEN…SDED. Basic and acidic residues predominate over residues 25–42; it reads PSKDEASSSDEELAKLDG. A compositionally biased stretch (acidic residues) spans 89–130; sequence EDADLLNMEEDEDDDEEGEDNEDEEDEEEEEESDEDDDEEDD. Basic and acidic residues predominate over residues 643–661; sequence ALENSKKDDKKKKKEEEAA.

It belongs to the NOC2 family.

The protein resides in the nucleus. Its function is as follows. Required for normal somatic gonad development and for regulation of germline development and proliferation. The chain is Nucleolar complex protein 2 homolog (pro-2) from Caenorhabditis briggsae.